The chain runs to 319 residues: Glycine--tRNA ligase alpha subunit (319 aa).

Belongs to the class-II aminoacyl-tRNA synthetase family. As to quaternary structure, tetramer of two alpha and two beta subunits.

Its subcellular location is the cytoplasm. It catalyses the reaction tRNA(Gly) + glycine + ATP = glycyl-tRNA(Gly) + AMP + diphosphate. This chain is Glycine--tRNA ligase alpha subunit, found in Oenococcus oeni (strain ATCC BAA-331 / PSU-1).